A 358-amino-acid chain; its full sequence is Cytoplasmic tRNA 2-thiolation protein 1 (358 aa).

It belongs to the TtcA family. CTU1/NCS6/ATPBD3 subfamily.

The protein resides in the cytoplasm. Its pathway is tRNA modification; 5-methoxycarbonylmethyl-2-thiouridine-tRNA biosynthesis. In terms of biological role, plays a central role in 2-thiolation of mcm(5)S(2)U at tRNA wobble positions of tRNA(Lys), tRNA(Glu) and tRNA(Gln). Directly binds tRNAs and probably acts by catalyzing adenylation of tRNAs, an intermediate required for 2-thiolation. It is unclear whether it acts as a sulfurtransferase that transfers sulfur from thiocarboxylated URM1 onto the uridine of tRNAs at wobble position. Prior mcm(5) tRNA modification by the elongator complex is required for 2-thiolation. May also be involved in protein urmylation. This chain is Cytoplasmic tRNA 2-thiolation protein 1, found in Candida glabrata (strain ATCC 2001 / BCRC 20586 / JCM 3761 / NBRC 0622 / NRRL Y-65 / CBS 138) (Yeast).